A 449-amino-acid polypeptide reads, in one-letter code: Histidinol dehydrogenase (449 aa).

3 residues coordinate NAD(+): tyrosine 136, glutamine 204, and asparagine 232. Positions 255, 277, and 280 each coordinate substrate. Zn(2+) contacts are provided by glutamine 277 and histidine 280. Residues glutamate 346 and histidine 347 each act as proton acceptor in the active site. Residues histidine 347, aspartate 380, glutamate 434, and histidine 439 each coordinate substrate. Aspartate 380 serves as a coordination point for Zn(2+). Histidine 439 contacts Zn(2+).

The protein belongs to the histidinol dehydrogenase family. Zn(2+) is required as a cofactor.

It carries out the reaction L-histidinol + 2 NAD(+) + H2O = L-histidine + 2 NADH + 3 H(+). It functions in the pathway amino-acid biosynthesis; L-histidine biosynthesis; L-histidine from 5-phospho-alpha-D-ribose 1-diphosphate: step 9/9. Catalyzes the sequential NAD-dependent oxidations of L-histidinol to L-histidinaldehyde and then to L-histidine. This is Histidinol dehydrogenase (hisD) from Mycobacterium leprae (strain TN).